The sequence spans 483 residues: Spore germination protein B1 (483 aa).

5 consecutive transmembrane segments (helical) span residues 289 to 309, 323 to 343, 353 to 373, 375 to 395, and 410 to 430; these read ILIT…HTGL, LNVP…IELI, PIGQ…AVQA, IVSA…FTVP, and VMIS…LFVI.

The protein belongs to the GerABKA family.

It is found in the cell membrane. Functionally, involved in the response to the germinative mixture of L-asparagine, glucose, fructose and potassium ions (AGFK). Cannot stimulate germination in the absence of gerD and gerK gene products (fructose and glucose receptors respectively). The polypeptide is Spore germination protein B1 (gerBA) (Bacillus subtilis (strain 168)).